The following is a 240-amino-acid chain: Small ribosomal subunit protein uS2 (240 aa).

This sequence belongs to the universal ribosomal protein uS2 family.

The sequence is that of Small ribosomal subunit protein uS2 (rpsB) from Pasteurella multocida (strain Pm70).